Here is a 328-residue protein sequence, read N- to C-terminus: Coiled-coil domain-containing protein 54 (328 aa).

Residues 122-151 adopt a coiled-coil conformation; sequence TTKDILSMKEDIKALKKKVTELEKQNSYSR. Phosphothreonine is present on Thr-182. The segment covering 186–197 has biased composition (basic and acidic residues); the sequence is TDREMSSAEPEK. The tract at residues 186 to 205 is disordered; sequence TDREMSSAEPEKVPSYPKST.

This is Coiled-coil domain-containing protein 54 (CCDC54) from Macaca fascicularis (Crab-eating macaque).